The primary structure comprises 585 residues: Arginine--tRNA ligase (585 aa).

Positions 127-137 (PNTNKPLHVGH) match the 'HIGH' region motif.

Belongs to the class-I aminoacyl-tRNA synthetase family. Monomer.

It is found in the cytoplasm. It catalyses the reaction tRNA(Arg) + L-arginine + ATP = L-arginyl-tRNA(Arg) + AMP + diphosphate. This chain is Arginine--tRNA ligase (argS), found in Borreliella burgdorferi (strain ATCC 35210 / DSM 4680 / CIP 102532 / B31) (Borrelia burgdorferi).